Reading from the N-terminus, the 307-residue chain is Mitochondrial brown fat uncoupling protein 1 (307 aa).

Topologically, residues 1–10 (MVSLTTSEVH) are mitochondrial intermembrane. The helical transmembrane segment at 11–32 (PTMGVKTFSAGISACLADIITF) threads the bilayer. 3 Solcar repeats span residues 11–102 (PTMG…VQEY), 111–201 (PTLG…MKGA), and 210–295 (DDVP…LKKE). Residues 33-73 (PLDTAKVRLQIQGEGQTSSTIRYKGVLGTITTLAKTEGWPK) are Mitochondrial matrix-facing. Lys-56 serves as a coordination point for fatty acid 16:0. Residues 74–96 (LYSGLPAGIQRQISFASLRIGLY) traverse the membrane as a helical segment. Over 97–116 (DTVQEYFSSGKETPPTLGNR) the chain is Mitochondrial intermembrane. A helical transmembrane segment spans residues 117–133 (ISAGLMTGGVAVFIGQP). At 134–178 (TEVVKVRLQAQSHLHGIKPRYTGTYNAYRIIATTESFSTLWKGTT) the chain is on the mitochondrial matrix side. The helical transmembrane segment at 179-195 (PNLMRNVIINRTELVTY) threads the bilayer. The Mitochondrial intermembrane portion of the chain corresponds to 196–212 (DLMKGALVNNQILADDV). Residues 213-232 (PCHLLSALVAGFCTTFLASP) form a helical membrane-spanning segment. The Mitochondrial matrix segment spans residues 233 to 266 (ADVVKTRFINSLPGQYPSVPSCAMTMLTKEGPTA). Position 254 is a cysteine sulfenic acid (-SOH) (Cys-254). A helical membrane pass occupies residues 267–289 (FFKGFVPSFLRLASWNVIMFVCF). Residue Lys-269 participates in fatty acid 16:0 binding. Residues 290–307 (EQLKKELMKSRQTMDCTT) are Mitochondrial intermembrane-facing.

The protein belongs to the mitochondrial carrier (TC 2.A.29) family. As to quaternary structure, most probably functions as a monomer. Binds one purine nucleotide per monomer. However, has also been suggested to function as a homodimer or a homotetramer. Tightly associates with cardiolipin in the mitochondrion inner membrane; may stabilize and regulate its activity. In terms of processing, may undergo sulfenylation upon cold exposure. May increase the sensitivity of UCP1 thermogenic function to the activation by noradrenaline probably through structural effects. May undergo ubiquitin-mediated proteasomal degradation.

Its subcellular location is the mitochondrion inner membrane. It carries out the reaction H(+)(in) = H(+)(out). With respect to regulation, has no constitutive proton transporter activity and has to be activated by long-chain fatty acids/LCFAs. Inhibited by purine nucleotides. Both purine nucleotides and LCFAs bind the cytosolic side of the transporter and directly compete to activate or inhibit it. Activated by noradrenaline and reactive oxygen species. Despite lacking canonical translational encoding for selenocysteine, a small pool of the protein has been observed to selectively incorporate selenocysteine at 'Cys-254'. Selenocysteine-modified protein is highly sensitive to redox modification and may constitute a pool of protein highly sensitive to activation by elevated levels of reactive oxygen species (ROS). Its function is as follows. Mitochondrial protein responsible for thermogenic respiration, a specialized capacity of brown adipose tissue and beige fat that participates in non-shivering adaptive thermogenesis to temperature and diet variations and more generally to the regulation of energy balance. Functions as a long-chain fatty acid/LCFA and proton symporter, simultaneously transporting one LCFA and one proton through the inner mitochondrial membrane. However, LCFAs remaining associated with the transporter via their hydrophobic tails, it results in an apparent transport of protons activated by LCFAs. Thereby, dissipates the mitochondrial proton gradient and converts the energy of substrate oxydation into heat instead of ATP. Regulates the production of reactive oxygen species/ROS by mitochondria. The protein is Mitochondrial brown fat uncoupling protein 1 of Dicrostonyx groenlandicus (Northern collared lemming).